Consider the following 592-residue polypeptide: Aspartate--tRNA ligase (592 aa).

Residue E173 participates in L-aspartate binding. The aspartate stretch occupies residues 197–200 (QLFK). Residue R219 participates in L-aspartate binding. ATP is bound by residues 219 to 221 (RDE) and Q228. Position 449 (H449) interacts with L-aspartate. An ATP-binding site is contributed by E483. An L-aspartate-binding site is contributed by R490. 535–538 (GLDR) lines the ATP pocket.

The protein belongs to the class-II aminoacyl-tRNA synthetase family. Type 1 subfamily. Homodimer.

It localises to the cytoplasm. The enzyme catalyses tRNA(Asp) + L-aspartate + ATP = L-aspartyl-tRNA(Asp) + AMP + diphosphate. Functionally, catalyzes the attachment of L-aspartate to tRNA(Asp) in a two-step reaction: L-aspartate is first activated by ATP to form Asp-AMP and then transferred to the acceptor end of tRNA(Asp). This Shewanella loihica (strain ATCC BAA-1088 / PV-4) protein is Aspartate--tRNA ligase.